A 259-amino-acid chain; its full sequence is Pyrroloquinoline-quinone synthase (259 aa).

This sequence belongs to the PqqC family.

The catalysed reaction is 6-(2-amino-2-carboxyethyl)-7,8-dioxo-1,2,3,4,7,8-hexahydroquinoline-2,4-dicarboxylate + 3 O2 = pyrroloquinoline quinone + 2 H2O2 + 2 H2O + H(+). The protein operates within cofactor biosynthesis; pyrroloquinoline quinone biosynthesis. In terms of biological role, ring cyclization and eight-electron oxidation of 3a-(2-amino-2-carboxyethyl)-4,5-dioxo-4,5,6,7,8,9-hexahydroquinoline-7,9-dicarboxylic-acid to PQQ. This chain is Pyrroloquinoline-quinone synthase, found in Bradyrhizobium diazoefficiens (strain JCM 10833 / BCRC 13528 / IAM 13628 / NBRC 14792 / USDA 110).